A 608-amino-acid chain; its full sequence is MGRKQKSKQGIPPTLEENHNSSHKVTENAKKRKHSKEKPQNSRKRQLAEEKKSLFENSDSENEKDLIDADEFEEAETLSDLEHDEEPQTFADEFIDDEAKECEGEEEDSVFDSDEEHEVKPMFSDDSGDEEDLELANMEAMSRKLDEEAELEEKEAEEELHTNIHPEAPTVLPPIDGFTDSQPISTLPQDLSQIQLRIQEIVRVLNDFKNLCEPGRNRSEYVDQLLNDICAYYGYSRFLAEKLFELFSVSEAVEFFEANEMPRPVTIRTNTLKTQRRELAQALINRGVNLEPIGKWSKVGLQVFESQVPIGATPEYLAGHYILQAASSFLPVMALAPQPNERILDMSSAPGGKVTYVAALQKNTGIIFANDSNKARTKALSANIHRLGVRNAIVCNYDGRKFPNEVIGGFDRVLLDAPCSGTGVIYKDQSVKTNKSERDFDTLSHLQRQLLLSAIDSVNADSKTGGFIVYSTCSITVDEDEAVIQYALKKRPNVKLVSTGLEFGREGFTRFREKRFHPSLKLTRRYYPHVHNIDGFFVAKLKKISDKIPTVNVADDMKDGTNNDVEIEKNSTEIDNITFNDEADKEIIEQNRRKWLKSKGYKVAKKKD.

2 disordered regions span residues 1–130 (MGRK…SGDE) and 145–169 (LDEE…PEAP). The span at 16–29 (EENHNSSHKVTENA) shows a compositional bias: basic and acidic residues. The segment covering 30–45 (KKRKHSKEKPQNSRKR) has biased composition (basic residues). Phosphoserine occurs at positions 58 and 60. 2 stretches are compositionally biased toward acidic residues: residues 68-116 (DADE…SDEE) and 147-158 (EEAELEEKEAEE). S-adenosyl-L-methionine contacts are provided by residues 347–353 (SSAPGGK), aspartate 371, aspartate 398, and aspartate 416. The active-site Nucleophile is the cysteine 473.

This sequence belongs to the class I-like SAM-binding methyltransferase superfamily. RsmB/NOP family.

It is found in the nucleus. The protein resides in the nucleolus. The enzyme catalyses a cytidine in 25S rRNA + S-adenosyl-L-methionine = a 5-methylcytidine in 25S rRNA + S-adenosyl-L-homocysteine + H(+). S-adenosyl-L-methionine-dependent methyltransferase that specifically methylates the C(5) position of a cytosine in 25S rRNA. Required for 60S ribosomal subunit synthesis and processing. The protein is 25S rRNA (cytosine-C(5))-methyltransferase nop2 (nop2) of Schizosaccharomyces pombe (strain 972 / ATCC 24843) (Fission yeast).